A 294-amino-acid chain; its full sequence is Ribosomal RNA small subunit methyltransferase A (294 aa).

Asn29, Val31, Gly56, Glu77, Asp107, and Asn126 together coordinate S-adenosyl-L-methionine.

It belongs to the class I-like SAM-binding methyltransferase superfamily. rRNA adenine N(6)-methyltransferase family. RsmA subfamily.

It localises to the cytoplasm. It catalyses the reaction adenosine(1518)/adenosine(1519) in 16S rRNA + 4 S-adenosyl-L-methionine = N(6)-dimethyladenosine(1518)/N(6)-dimethyladenosine(1519) in 16S rRNA + 4 S-adenosyl-L-homocysteine + 4 H(+). Specifically dimethylates two adjacent adenosines (A1518 and A1519) in the loop of a conserved hairpin near the 3'-end of 16S rRNA in the 30S particle. May play a critical role in biogenesis of 30S subunits. In Mycobacterium sp. (strain MCS), this protein is Ribosomal RNA small subunit methyltransferase A.